Consider the following 257-residue polypeptide: 3-methyl-2-oxobutanoate hydroxymethyltransferase (257 aa).

The Mg(2+) site is built by Asp44 and Asp83. 3-methyl-2-oxobutanoate is bound by residues 44–45, Asp83, and Lys113; that span reads DS. Glu115 is a binding site for Mg(2+). Glu182 acts as the Proton acceptor in catalysis.

This sequence belongs to the PanB family. Homodecamer; pentamer of dimers. It depends on Mg(2+) as a cofactor.

It localises to the cytoplasm. The catalysed reaction is 3-methyl-2-oxobutanoate + (6R)-5,10-methylene-5,6,7,8-tetrahydrofolate + H2O = 2-dehydropantoate + (6S)-5,6,7,8-tetrahydrofolate. It functions in the pathway cofactor biosynthesis; (R)-pantothenate biosynthesis; (R)-pantoate from 3-methyl-2-oxobutanoate: step 1/2. In terms of biological role, catalyzes the reversible reaction in which hydroxymethyl group from 5,10-methylenetetrahydrofolate is transferred onto alpha-ketoisovalerate to form ketopantoate. The protein is 3-methyl-2-oxobutanoate hydroxymethyltransferase of Rippkaea orientalis (strain PCC 8801 / RF-1) (Cyanothece sp. (strain PCC 8801)).